The chain runs to 326 residues: MAFTPFPPRQPTASARLPLTLMTLDDWALATITGADSEKYMQGQVTADVSQMAEDQHLLAAHCDAKGKMWSNLRLFRDGDGFAWIERRSVREPQLTELKKYAVFSKVTIAPDDEHVLLGVAGFQARAALANIFSELPSKEKQVVKEGATTLLWFEYPAERFLIVTDEATANMLTDKLRGEAELNNSQQWLALNIEAGFPVIDAANSGQFIPQATNLQALGGISFKKGCYTGQEMVARAKFRGANKRALWLLAGSASRLPEAGEDLELKMGENWRRTGTVLAAVKLEDGQVVVQVVMNNDMEPDSIFRVRDDANTLHIEPLPYSLEE.

Residues tryptophan 27 and tryptophan 189 each contribute to the folate site.

Belongs to the tRNA-modifying YgfZ family.

Its subcellular location is the cytoplasm. Its function is as follows. Folate-binding protein involved in regulating the level of ATP-DnaA and in the modification of some tRNAs. It is probably a key factor in regulatory networks that act via tRNA modification, such as initiation of chromosomal replication. The protein is tRNA-modifying protein YgfZ of Shigella sonnei (strain Ss046).